Reading from the N-terminus, the 225-residue chain is Biosynthetic peptidoglycan transglycosylase (225 aa).

Residues Ile12–Phe32 traverse the membrane as a helical segment.

Belongs to the glycosyltransferase 51 family.

It localises to the cell inner membrane. It carries out the reaction [GlcNAc-(1-&gt;4)-Mur2Ac(oyl-L-Ala-gamma-D-Glu-L-Lys-D-Ala-D-Ala)](n)-di-trans,octa-cis-undecaprenyl diphosphate + beta-D-GlcNAc-(1-&gt;4)-Mur2Ac(oyl-L-Ala-gamma-D-Glu-L-Lys-D-Ala-D-Ala)-di-trans,octa-cis-undecaprenyl diphosphate = [GlcNAc-(1-&gt;4)-Mur2Ac(oyl-L-Ala-gamma-D-Glu-L-Lys-D-Ala-D-Ala)](n+1)-di-trans,octa-cis-undecaprenyl diphosphate + di-trans,octa-cis-undecaprenyl diphosphate + H(+). Its pathway is cell wall biogenesis; peptidoglycan biosynthesis. Its function is as follows. Peptidoglycan polymerase that catalyzes glycan chain elongation from lipid-linked precursors. This Marinomonas sp. (strain MWYL1) protein is Biosynthetic peptidoglycan transglycosylase.